A 102-amino-acid chain; its full sequence is Large ribosomal subunit protein uL24 (102 aa).

It belongs to the universal ribosomal protein uL24 family. Part of the 50S ribosomal subunit.

One of two assembly initiator proteins, it binds directly to the 5'-end of the 23S rRNA, where it nucleates assembly of the 50S subunit. In terms of biological role, one of the proteins that surrounds the polypeptide exit tunnel on the outside of the subunit. The chain is Large ribosomal subunit protein uL24 from Cupriavidus necator (strain ATCC 17699 / DSM 428 / KCTC 22496 / NCIMB 10442 / H16 / Stanier 337) (Ralstonia eutropha).